A 60-amino-acid chain; its full sequence is Large ribosomal subunit protein eL37 (60 aa).

Residues cysteine 19, cysteine 22, cysteine 34, and cysteine 37 each contribute to the Zn(2+) site. The C4-type zinc finger occupies cysteine 19–cysteine 37.

It belongs to the eukaryotic ribosomal protein eL37 family. Zn(2+) is required as a cofactor.

Functionally, binds to the 23S rRNA. This Methanosphaerula palustris (strain ATCC BAA-1556 / DSM 19958 / E1-9c) protein is Large ribosomal subunit protein eL37.